Reading from the N-terminus, the 389-residue chain is Arrestin-C (389 aa).

It belongs to the arrestin family. As to expression, retina and pineal gland.

May play a role in an as yet undefined retina-specific signal transduction. Could bind to photoactivated-phosphorylated red/green opsins. This Aquarana catesbeiana (American bullfrog) protein is Arrestin-C (arr3).